Consider the following 305-residue polypeptide: Acetylglutamate kinase (305 aa).

Residues 78-79 (GG), Arg-100, and Asn-202 contribute to the substrate site.

It belongs to the acetylglutamate kinase family. ArgB subfamily.

It localises to the cytoplasm. It catalyses the reaction N-acetyl-L-glutamate + ATP = N-acetyl-L-glutamyl 5-phosphate + ADP. The protein operates within amino-acid biosynthesis; L-arginine biosynthesis; N(2)-acetyl-L-ornithine from L-glutamate: step 2/4. Catalyzes the ATP-dependent phosphorylation of N-acetyl-L-glutamate. The sequence is that of Acetylglutamate kinase from Polaromonas sp. (strain JS666 / ATCC BAA-500).